The primary structure comprises 597 residues: Aspartate--tRNA(Asp/Asn) ligase (597 aa).

L-aspartate is bound at residue Glu-176. Residues 200 to 203 form an aspartate region; that stretch reads QQFK. L-aspartate is bound by residues Arg-222 and His-451. 222 to 224 lines the ATP pocket; sequence RDE. Glu-489 serves as a coordination point for ATP. Arg-496 provides a ligand contact to L-aspartate. ATP is bound at residue 541–544; that stretch reads GIDR.

This sequence belongs to the class-II aminoacyl-tRNA synthetase family. Type 1 subfamily. As to quaternary structure, homodimer.

It localises to the cytoplasm. It catalyses the reaction tRNA(Asx) + L-aspartate + ATP = L-aspartyl-tRNA(Asx) + AMP + diphosphate. Its function is as follows. Aspartyl-tRNA synthetase with relaxed tRNA specificity since it is able to aspartylate not only its cognate tRNA(Asp) but also tRNA(Asn). Reaction proceeds in two steps: L-aspartate is first activated by ATP to form Asp-AMP and then transferred to the acceptor end of tRNA(Asp/Asn). The sequence is that of Aspartate--tRNA(Asp/Asn) ligase from Orientia tsutsugamushi (strain Boryong) (Rickettsia tsutsugamushi).